The following is an 88-amino-acid chain: Transmembrane protein 069R (88 aa).

The next 2 helical transmembrane spans lie at 30-50 (ALWPPALAYAASVAAGYVFTA) and 67-87 (VGVFLGVLCALYNWMGSGDSF).

It localises to the host membrane. The chain is Transmembrane protein 069R from Frog virus 3 (isolate Goorha) (FV-3).